Here is a 264-residue protein sequence, read N- to C-terminus: CD320 antigen (264 aa).

Positions 1 to 28 (MARCGAGRAAALGLVLRLLLGLRTGPEA) are cleaved as a signal peptide. The region spanning 50–87 (SCPTDTFKCLTSGYCVPLSWRCDGDRDCSDGSDEEECR) is the LDL-receptor class A 1 domain. 3 cysteine pairs are disulfide-bonded: C51/C64, C58/C77, and C71/C86. Residues W69, D72, D74, D76, D82, and E83 each coordinate Ca(2+). An N-linked (GlcNAc...) asparagine glycan is attached at N122. In terms of domain architecture, LDL-receptor class A 2 spans 127–164 (PCQEGELRCILDDVCIPHTWRCDGHPDCPDSSDELSCD). Intrachain disulfides connect C128–C141, C135–C154, and C148–C163. Positions 146, 149, 151, 153, 159, and 160 each coordinate Ca(2+). The N-linked (GlcNAc...) asparagine glycan is linked to N195. A helical membrane pass occupies residues 213–233 (VIAAAGVLSAILVSATILILL).

Interacts (via LDL-receptor class A domains) with TCN2.

It localises to the cell membrane. In terms of biological role, receptor for transcobalamin saturated with cobalamin (TCbl). Plays an important role in cobalamin uptake. Plasma membrane protein that is expressed on follicular dendritic cells (FDC) and mediates interaction with germinal center B cells. Functions as a costimulator to promote B cell responses to antigenic stimuli; promotes B cell differentiation and proliferation. Germinal center-B (GC-B) cells differentiate into memory B-cells and plasma cells (PC) through interaction with T-cells and follicular dendritic cells (FDC). CD320 augments the proliferation of PC precursors generated by IL-10. The polypeptide is CD320 antigen (Cd320) (Rattus norvegicus (Rat)).